An 88-amino-acid chain; its full sequence is Small ribosomal subunit protein uS17 (88 aa).

Belongs to the universal ribosomal protein uS17 family. In terms of assembly, part of the 30S ribosomal subunit.

In terms of biological role, one of the primary rRNA binding proteins, it binds specifically to the 5'-end of 16S ribosomal RNA. The sequence is that of Small ribosomal subunit protein uS17 from Pseudomonas fluorescens (strain ATCC BAA-477 / NRRL B-23932 / Pf-5).